A 408-amino-acid chain; its full sequence is Argininosuccinate synthase (408 aa).

ATP-binding positions include 10–18 (AYSGGLDTS) and Ala37. Positions 90 and 95 each coordinate L-citrulline. Gly120 provides a ligand contact to ATP. Residues Thr122, Asn126, and Asp127 each contribute to the L-aspartate site. L-citrulline is bound at residue Asn126. 5 residues coordinate L-citrulline: Arg130, Ser182, Ser191, Glu267, and Tyr279.

It belongs to the argininosuccinate synthase family. Type 1 subfamily. Homotetramer.

The protein localises to the cytoplasm. The enzyme catalyses L-citrulline + L-aspartate + ATP = 2-(N(omega)-L-arginino)succinate + AMP + diphosphate + H(+). It functions in the pathway amino-acid biosynthesis; L-arginine biosynthesis; L-arginine from L-ornithine and carbamoyl phosphate: step 2/3. The protein is Argininosuccinate synthase of Paraburkholderia phytofirmans (strain DSM 17436 / LMG 22146 / PsJN) (Burkholderia phytofirmans).